A 224-amino-acid chain; its full sequence is Mammalian ependymin-related protein 1 (224 aa).

Residues methionine 1–glycine 37 form the signal peptide. 3 disulfide bridges follow: cysteine 42–cysteine 172, cysteine 88–cysteine 222, and cysteine 113–cysteine 210. N-linked (GlcNAc...) asparagine glycans are attached at residues asparagine 130 and asparagine 182.

It belongs to the ependymin family. Homodimer. Post-translationally, N-glycosylated; the glycan contains mannose-6-phosphate moieties. In terms of tissue distribution, ubiquitous. Detected in brain, heart, skeletal muscle, kidney, testis, ovary and prostate.

Its subcellular location is the lysosome lumen. It is found in the secreted. Binds anionic lipids and gangliosides at acidic pH. This chain is Mammalian ependymin-related protein 1 (EPDR1), found in Homo sapiens (Human).